A 96-amino-acid chain; its full sequence is Ribonuclease P protein component 1 (96 aa).

It belongs to the eukaryotic/archaeal RNase P protein component 1 family. As to quaternary structure, consists of a catalytic RNA component and at least 5 protein subunits.

It localises to the cytoplasm. The catalysed reaction is Endonucleolytic cleavage of RNA, removing 5'-extranucleotides from tRNA precursor.. Its function is as follows. Part of ribonuclease P, a protein complex that generates mature tRNA molecules by cleaving their 5'-ends. The chain is Ribonuclease P protein component 1 from Methanococcus maripaludis (strain DSM 14266 / JCM 13030 / NBRC 101832 / S2 / LL).